The chain runs to 63 residues: Large ribosomal subunit protein bL28 (63 aa).

This sequence belongs to the bacterial ribosomal protein bL28 family.

The protein is Large ribosomal subunit protein bL28 of Kosmotoga olearia (strain ATCC BAA-1733 / DSM 21960 / TBF 19.5.1).